Here is a 974-residue protein sequence, read N- to C-terminus: Coiled-coil domain-containing protein 146 (974 aa).

A disordered region spans residues 1-44; that stretch reads MEDRSKYIAEESEDEEDEEQEEKEKKGGASTSTETEEDQEDIPS. Over residues 10 to 21 the composition is skewed to acidic residues; that stretch reads EESEDEEDEEQE. At Ser12 the chain carries Phosphoserine. 6 coiled-coil regions span residues 105 to 160, 195 to 340, 421 to 474, 512 to 660, 687 to 712, and 767 to 848; these read VQLL…QERE, KLLK…TKEN, LPEQ…REVL, KKLE…NESG, QDIE…QRQI, and LTEE…ELSM.

As to quaternary structure, interacts with CCDC38 and CCDC42. Interacts with intraflagellar transport proteins IFT20 and IFT88.

It is found in the cytoplasm. It localises to the cytoskeleton. The protein localises to the microtubule organizing center. Its subcellular location is the centrosome. The protein resides in the centriole. It is found in the cell projection. It localises to the cilium. The protein localises to the flagellum. Its subcellular location is the flagellum axoneme. The protein resides in the cilium basal body. It is found in the midbody. In terms of biological role, essential for sperm flagellum biogenesis and male fertility. The protein is Coiled-coil domain-containing protein 146 (Ccdc146) of Rattus norvegicus (Rat).